Here is a 671-residue protein sequence, read N- to C-terminus: Probable potassium transport system protein Kup 2 (671 aa).

A run of 12 helical transmembrane segments spans residues 18 to 38, 60 to 80, 103 to 123, 149 to 169, 173 to 193, 218 to 238, 252 to 272, 292 to 312, 343 to 363, 373 to 393, 402 to 422, and 424 to 444; these read GFLI…LYAM, VSLV…LIAL, WLIV…ALTP, VTTL…ASLV, FGPI…INSF, AGFF…ALYS, WPFV…WLLA, MVIY…QALI, LYIP…VLYF, YSLA…YFLI, IAFI…ASLV, and FING…VMFI.

It belongs to the HAK/KUP transporter (TC 2.A.72) family.

It localises to the cell membrane. The enzyme catalyses K(+)(in) + H(+)(in) = K(+)(out) + H(+)(out). Functionally, transport of potassium into the cell. Likely operates as a K(+):H(+) symporter. In Lactococcus lactis subsp. cremoris (strain MG1363), this protein is Probable potassium transport system protein Kup 2.